A 95-amino-acid polypeptide reads, in one-letter code: Co-chaperonin GroES (95 aa).

It belongs to the GroES chaperonin family. As to quaternary structure, heptamer of 7 subunits arranged in a ring. Interacts with the chaperonin GroEL.

The protein localises to the cytoplasm. Functionally, together with the chaperonin GroEL, plays an essential role in assisting protein folding. The GroEL-GroES system forms a nano-cage that allows encapsulation of the non-native substrate proteins and provides a physical environment optimized to promote and accelerate protein folding. GroES binds to the apical surface of the GroEL ring, thereby capping the opening of the GroEL channel. The sequence is that of Co-chaperonin GroES from Vesicomyosocius okutanii subsp. Calyptogena okutanii (strain HA).